The following is a 38-amino-acid chain: Large ribosomal subunit protein bL36 (38 aa).

It belongs to the bacterial ribosomal protein bL36 family.

This chain is Large ribosomal subunit protein bL36, found in Buchnera aphidicola subsp. Baizongia pistaciae (strain Bp).